The sequence spans 219 residues: MGMSSLKLLKYVLFIFNLLFWVCGCCILGFGIYFLVQNTYGVLFRNLPFLTLGNILVIVGSIIMVVAFLGCMGSIKENKCLLMSFFVLLLIILLAEVTIAILLFVYEQKLNTLVAEGLNDSIQHYHSDNSTMKAWDFIQTQLQCCGVNGSSDWTSGPPSSCPSGADVQGCYNKAKSWFHSNFLYIGIITICVCVIQVLGMSFALTLNCQIDKTSQALGL.

Over 1–11 (MGMSSLKLLKY) the chain is Cytoplasmic. A helical transmembrane segment spans residues 12–32 (VLFIFNLLFWVCGCCILGFGI). Residues 33-54 (YFLVQNTYGVLFRNLPFLTLGN) are Extracellular-facing. A helical membrane pass occupies residues 55–69 (ILVIVGSIIMVVAFL). Residues 70 to 80 (GCMGSIKENKC) are Cytoplasmic-facing. A helical membrane pass occupies residues 81 to 106 (LLMSFFVLLLIILLAEVTIAILLFVY). Over 107–181 (EQKLNTLVAE…NKAKSWFHSN (75 aa)) the chain is Extracellular. N-linked (GlcNAc...) asparagine glycans are attached at residues Asn-119, Asn-129, and Asn-148. A helical membrane pass occupies residues 182-206 (FLYIGIITICVCVIQVLGMSFALTL). At 207–219 (NCQIDKTSQALGL) the chain is on the cytoplasmic side.

This sequence belongs to the tetraspanin (TM4SF) family. As to quaternary structure, interacts with SCIMP. Interacts with CD45/PTPRC. Interacts with IL7R. Interacts with RBL2 and PPP2CA.

Its subcellular location is the cell membrane. The protein resides in the cell junction. It localises to the membrane. Its function is as follows. Structural component of specialized membrane microdomains known as tetraspanin-enriched microdomains (TERMs), which act as platforms for receptor clustering and signaling. Participates thereby in diverse biological functions such as cell signal transduction, adhesion, migration and protein trafficking. Plays a role in the activation of monocytes and B-cells. Acts as an essential regulator of B-cell development by promoting interleukin-7 receptor/IL7R signaling. Also promotes, in B-cells, the BCR signaling by recruiting PKC to the plasma membrane in order to phosphorylate its substrates. Plays an essential role in lymphocyte homing to lymph nodes by stabilizing L-selectin/SELL cell surface expression. Also mediates metabolic and inflammatory functions in hepatocytes and adipose tissue by promoting TNF-alpha and LPS signaling independent of the immune compartment. Protects hematopoietic stem cell function in response to stress by facilitating DREAM complex activity through association with p130/RBL2 and its phosphatase PP2A. This Mus musculus (Mouse) protein is Leukocyte surface antigen CD53 (Cd53).